The sequence spans 248 residues: Probable transcriptional regulatory protein ECH_0704 (248 aa).

The disordered stretch occupies residues 1–21 (MAGHSQFANIKHRKGAQDAKR).

This sequence belongs to the TACO1 family.

It is found in the cytoplasm. This Ehrlichia chaffeensis (strain ATCC CRL-10679 / Arkansas) protein is Probable transcriptional regulatory protein ECH_0704.